We begin with the raw amino-acid sequence, 355 residues long: Syntaxin-5 (355 aa).

The Cytoplasmic portion of the chain corresponds to 1 to 333; the sequence is MIPRKRYGSK…KYFQSVTSNR (333 aa). The segment covering 28 to 37 has biased composition (polar residues); that stretch reads PATAGSSSSD. Residues 28-47 form a disordered region; the sequence is PATAGSSSSDIAPLPPPVAL. The short motif at 245-247 is the IxM motif; signal for cargo packaging into COPII-coated vesicles element; the sequence is IDM. Positions 263-325 constitute a t-SNARE coiled-coil homology domain; it reads DSYIQSRADT…EAAHSEILKY (63 aa). Positions 287 to 318 form a coiled coil; sequence FQQLAHMVKEQEETIQRIDENVLGAQLDVEAA. A helical; Anchor for type IV membrane protein transmembrane segment spans residues 334–354; sequence WLMVKIFLILIVFFIIFVVFL. Alanine 355 is a topological domain (vesicular).

It belongs to the syntaxin family. Part of a ternary complex containing STX5A, NSFL1C and VCP. Part of a unique SNARE complex composed of the Golgi SNAREs GOSR1, GOSR2 and YKT6. This complex also includes VTI1A. Component of a SNARE complex consisting of STX5, YKT6, GOSR1 and BET1L. Interacts with BET1L. Interacts with BET1. Interacts with COG4. Interacts with GM130/GOLGA2. Interacts (via IxM motif) with SEC24C and SEC24D; mediates STX5 packaging into COPII-coated vesicles. Interacts with VLDLR; this interaction mediates VLDLR translocation from the endoplasmic reticulum to the plasma membrane.

It localises to the endoplasmic reticulum-Golgi intermediate compartment membrane. The protein resides in the golgi apparatus membrane. In terms of biological role, mediates endoplasmic reticulum to Golgi transport. Together with p115/USO1 and GM130/GOLGA2, involved in vesicle tethering and fusion at the cis-Golgi membrane to maintain the stacked and inter-connected structure of the Golgi apparatus. This Bos taurus (Bovine) protein is Syntaxin-5 (STX5).